Here is a 57-residue protein sequence, read N- to C-terminus: MAFTASDICKIIVAVILPPLGVFFERGCGADLFINILLTILGYLPGIVHALYIILKY.

A helical membrane pass occupies residues 34-54; sequence INILLTILGYLPGIVHALYII.

This sequence belongs to the UPF0057 (PMP3) family.

It is found in the cell membrane. Functionally, plays a role in the regulation of membrane potential. Could mediate a proton leak. This is Plasma membrane proteolipid 3 (pmp-1) from Neurospora crassa (strain ATCC 24698 / 74-OR23-1A / CBS 708.71 / DSM 1257 / FGSC 987).